Reading from the N-terminus, the 234-residue chain is Sugar fermentation stimulation protein homolog (234 aa).

This sequence belongs to the SfsA family.

The polypeptide is Sugar fermentation stimulation protein homolog (Shewanella sp. (strain MR-7)).